The chain runs to 668 residues: DNA ligase (668 aa).

NAD(+) contacts are provided by residues D32–D36, S81–L82, and E110. The active-site N6-AMP-lysine intermediate is the K112. NAD(+) contacts are provided by R133, E167, K283, and K307. C401, C404, C419, and C424 together coordinate Zn(2+). The 83-residue stretch at Q586–K668 folds into the BRCT domain.

Belongs to the NAD-dependent DNA ligase family. LigA subfamily. Mg(2+) is required as a cofactor. It depends on Mn(2+) as a cofactor.

It catalyses the reaction NAD(+) + (deoxyribonucleotide)n-3'-hydroxyl + 5'-phospho-(deoxyribonucleotide)m = (deoxyribonucleotide)n+m + AMP + beta-nicotinamide D-nucleotide.. Its function is as follows. DNA ligase that catalyzes the formation of phosphodiester linkages between 5'-phosphoryl and 3'-hydroxyl groups in double-stranded DNA using NAD as a coenzyme and as the energy source for the reaction. It is essential for DNA replication and repair of damaged DNA. This is DNA ligase from Staphylococcus carnosus (strain TM300).